The following is a 649-amino-acid chain: Glycerol-3-phosphate dehydrogenase, mitochondrial (649 aa).

Position 69–97 (D69–E97) interacts with FAD.

The protein belongs to the FAD-dependent glycerol-3-phosphate dehydrogenase family. Requires FAD as cofactor.

It is found in the mitochondrion. It carries out the reaction a quinone + sn-glycerol 3-phosphate = dihydroxyacetone phosphate + a quinol. Its pathway is polyol metabolism; glycerol degradation via glycerol kinase pathway; glycerone phosphate from sn-glycerol 3-phosphate (anaerobic route): step 1/1. The polypeptide is Glycerol-3-phosphate dehydrogenase, mitochondrial (gut2) (Schizosaccharomyces pombe (strain 972 / ATCC 24843) (Fission yeast)).